Here is an 857-residue protein sequence, read N- to C-terminus: MALPSSSLSSQIHTGATTQCIPHFHGSLNAGTSAGKRRSLYLRWGKDNQAKKLGPSKIVACAGQDPFSVPTLVKREFPPGFWKDHVIESLMPSYKVAPSDEKRIETLITEIKNMFRSMGYGETNPSAYDTAWVARIPAVDGSEKPQFPETLEWILQNQLKDGSWGEEFYFLAYDRILATLACIITLTIWQTGDTQVQKGIEFFKTQAGKIEEEADSHRPSGFEIVFPAMLKEAKALGLALPYELPFIQQIIEKREAKLQRLPSDLLYALPTTLLYSLEGLQEIVDWEKIMKLQSKDGSFLSSPASTAAVFMRTGNKKCLEFLNFVLKKFGNHVPCHYPLDLFERLWAVDTVERLGIDHHFKEEIKDALDYVYSHWDERGIGWARENPVPDIDDTAMGLRILRLHGYNVSSDVLKTFRDENGEFFCFLGQTQRGVTDMLNVNRCSHVAFPGETIIEEAKLCTERYLRNALEDTGAFDKWALKKNIRGEVEYALKYPWHRSMPRLEARSYIENYGPNDVWLGKTMYMMPNISNEKYLELAKLDFNRVQFFHRQELQDIRRWWNSSGFSQLGFTRERVAEIYFSPASFLFEPEFATCRAVYTKTSNFTVILDDLYDAHGTLDNLKLFSESVKRWDLSLVDQMPQDMKICFKGFYNTFNEIAEEGRKRQGRDVLSYIQKVWEVQLEAYTKEAEWSAVRYVPSYDEYIENASVSIALGTVVLISALFTGEILTDDILSKIGRDSRFLYLMGLTGRLVNDTKTYQAERGQGEVASAVQCYMKDHPEISEEEALKHVYTIMDNALDELNREFVNNRDVPDTCRRLVFETARIMQLFYMDGDGLTLSHNMEIKEHVKNCLFQPVA.

Residues 1–33 constitute a chloroplast transit peptide; it reads MALPSSSLSSQIHTGATTQCIPHFHGSLNAGTS. Lysine 257 is a substrate binding site. Residues aspartate 390 and aspartate 392 each coordinate Mg(2+). A DXDD motif motif is present at residues 390–393; sequence DIDD. Lysine 477 serves as a coordination point for substrate. Aspartate 609, aspartate 613, asparagine 753, threonine 757, and glutamate 761 together coordinate Mg(2+). A DDXXD motif motif is present at residues 609–613; the sequence is DDLYD.

It belongs to the terpene synthase family. Tpsd subfamily. Requires Mg(2+) as cofactor.

It is found in the plastid. The protein localises to the chloroplast. It catalyses the reaction (2E,6E,10E)-geranylgeranyl diphosphate = (+)-copalyl diphosphate. It carries out the reaction (+)-copalyl diphosphate = abieta-7,13-diene + diphosphate. The enzyme catalyses (+)-copalyl diphosphate = abieta-8(14),12-diene + diphosphate. The catalysed reaction is (+)-copalyl diphosphate = neoabietadiene + diphosphate. It functions in the pathway terpene metabolism; oleoresin biosynthesis. In terms of biological role, involved in defensive oleoresin formation in conifers in response to insect attack or other injury. Involved in diterpene (C20) olefins biosynthesis. Bifunctional enzyme that catalyzes two sequential cyclizations of geranylgeranyl diphosphate (GGPP) to levopimaradiene. Levopimaradiene is the major products of the enzyme with abietadiene and neoabietadiene. No activity with farnesyl diphosphate (FPP) as substrate. The chain is Bifunctional levopimaradiene synthase, chloroplastic from Pinus contorta (Shore pine).